We begin with the raw amino-acid sequence, 483 residues long: Rhamnulokinase (483 aa).

ATP is bound at residue A11 to R15. Substrate contacts are provided by residues G79 and H234 to T236. Catalysis depends on D235, which acts as the Proton acceptor. Residue T257 participates in ATP binding. N294 provides a ligand contact to substrate. Position 302 (Q302) interacts with ATP. A disulfide bridge connects residues C352 and C369. Residue G401 coordinates ATP.

The protein belongs to the rhamnulokinase family. Mg(2+) is required as a cofactor.

The enzyme catalyses L-rhamnulose + ATP = L-rhamnulose 1-phosphate + ADP + H(+). The protein operates within carbohydrate degradation; L-rhamnose degradation; glycerone phosphate from L-rhamnose: step 2/3. Involved in the catabolism of L-rhamnose (6-deoxy-L-mannose). Catalyzes the transfer of the gamma-phosphate group from ATP to the 1-hydroxyl group of L-rhamnulose to yield L-rhamnulose 1-phosphate. This is Rhamnulokinase from Listeria monocytogenes serovar 1/2a (strain ATCC BAA-679 / EGD-e).